Reading from the N-terminus, the 131-residue chain is Methylglyoxal synthase (131 aa).

Residues 1 to 131 form the MGS-like domain; the sequence is MKIALIAHDK…GDLDYRKLRK (131 aa). Residues His-8, Lys-12, 34 to 37, and 54 to 55 contribute to the substrate site; these read TGTT and SG. Residue Asp-60 is the Proton donor/acceptor of the active site. His-87 provides a ligand contact to substrate.

This sequence belongs to the methylglyoxal synthase family.

It carries out the reaction dihydroxyacetone phosphate = methylglyoxal + phosphate. Catalyzes the formation of methylglyoxal from dihydroxyacetone phosphate. This Bacillus anthracis (strain A0248) protein is Methylglyoxal synthase.